The following is an 84-amino-acid chain: Three-finger toxin 3FTx-1 (84 aa).

The signal sequence occupies residues 1 to 21 (MKTLLLTLVVVTIVCLDLGNS). Cystine bridges form between C24/C41, C34/C59, C63/C71, and C72/C77. An N-linked (GlcNAc...) asparagine glycan is attached at N78.

Belongs to the three-finger toxin family. Short-chain subfamily. Expressed by the venom gland.

It localises to the secreted. This Micrurus corallinus (Brazilian coral snake) protein is Three-finger toxin 3FTx-1.